The sequence spans 197 residues: Large ribosomal subunit protein uL10 (197 aa).

A disordered region spans residues 162 to 197 (READGETAETPAQETASDDSKSTKAEASDASTTENK). Residues 179–188 (DDSKSTKAEA) are compositionally biased toward basic and acidic residues.

This sequence belongs to the universal ribosomal protein uL10 family. In terms of assembly, part of the ribosomal stalk of the 50S ribosomal subunit. The N-terminus interacts with L11 and the large rRNA to form the base of the stalk. The C-terminus forms an elongated spine to which L12 dimers bind in a sequential fashion forming a multimeric L10(L12)X complex.

Forms part of the ribosomal stalk, playing a central role in the interaction of the ribosome with GTP-bound translation factors. The sequence is that of Large ribosomal subunit protein uL10 from Oenococcus oeni (strain ATCC BAA-331 / PSU-1).